Consider the following 570-residue polypeptide: Phosphocholine hydrolase Lem3 (570 aa).

It is found in the secreted. Its subcellular location is the host cytoplasm. The catalysed reaction is [Rab1 protein]-O-phosphocholine-L-serine + H2O = [Rab1 protein]-L-serine + phosphocholine + H(+). Functionally, virulence effector that plays a role in hijacking the host vesicular trafficking by recruiting the small guanosine triphosphatase (GTPase) Rab1 to the cytosolic face of the Legionella-containing vacuole (LCVs). Acts as a phosphocholine hydrolase by mediating the hydrolysis of phosphocholine to Ser residues of host RAB1 (RAB1A, RAB1B or RAB1C). Dephosphocholination of target proteins restores accessibility to GTPase effector LepB. Can act on both GDP-bound and GTP-bound Rab proteins. The polypeptide is Phosphocholine hydrolase Lem3 (lem3) (Legionella pneumophila subsp. pneumophila (strain Philadelphia 1 / ATCC 33152 / DSM 7513)).